We begin with the raw amino-acid sequence, 60 residues long: Protein CADMIUM TOLERANCE 4 (60 aa).

Residues 26–42 (GFLYACLFMLCCCFCCY) traverse the membrane as a helical segment.

This sequence belongs to the CYSTM1 family. In terms of tissue distribution, mainly expressed in shoots, and, to a lower extent, in roots.

The protein resides in the cell membrane. It localises to the secreted. Its subcellular location is the cell wall. In terms of biological role, confers resistance to heavy metal ions (e.g. aluminium (Al)) by chelating them at the plasma membrane of root cells, thus stopping their entry and reducing their accumulation. The polypeptide is Protein CADMIUM TOLERANCE 4 (Oryza sativa subsp. japonica (Rice)).